We begin with the raw amino-acid sequence, 45 residues long: Myotoxin-3 (45 aa).

3 cysteine pairs are disulfide-bonded: C4–C36, C11–C30, and C18–C37.

Monomer. As to expression, expressed by the venom gland.

It localises to the secreted. Its function is as follows. Cationic peptide that possesses multiple functions. It acts as a cell-penetrating peptide (CPP), and as a potent voltage-gated potassium channel (Kv) inhibitor. It exhibits antimicrobial activities, hind limb paralysis, and severe muscle necrosis by a non-enzymatic mechanism. This chain is Myotoxin-3, found in Crotalus viridis viridis (Prairie rattlesnake).